Consider the following 444-residue polypeptide: Phosphoglucosamine mutase (444 aa).

Catalysis depends on serine 102, which acts as the Phosphoserine intermediate. Mg(2+)-binding residues include serine 102, aspartate 241, aspartate 243, and aspartate 245. Serine 102 carries the post-translational modification Phosphoserine.

The protein belongs to the phosphohexose mutase family. Mg(2+) is required as a cofactor. Post-translationally, activated by phosphorylation.

It carries out the reaction alpha-D-glucosamine 1-phosphate = D-glucosamine 6-phosphate. Its function is as follows. Catalyzes the conversion of glucosamine-6-phosphate to glucosamine-1-phosphate. The polypeptide is Phosphoglucosamine mutase (Histophilus somni (strain 2336) (Haemophilus somnus)).